Here is a 149-residue protein sequence, read N- to C-terminus: Transcriptional repressor NrdR (149 aa).

A zinc finger lies at 3 to 34 (CPFCATDDTKVVDSRLTADGYQIRRRRECPVC). Residues 49 to 139 (PHIVKNNGSR…VYLSFDDVEE (91 aa)) form the ATP-cone domain.

This sequence belongs to the NrdR family. Zn(2+) is required as a cofactor.

Functionally, negatively regulates transcription of bacterial ribonucleotide reductase nrd genes and operons by binding to NrdR-boxes. The sequence is that of Transcriptional repressor NrdR from Glaesserella parasuis serovar 5 (strain SH0165) (Haemophilus parasuis).